The primary structure comprises 118 residues: MAKHNETGTQAEILAEQHLVSQGLTPLARNYHCKGGEIDLIMQQQRALVFVEVRFRKSAAFGSAAASVTRSKQQKIVTAAQHFLMDNSKLANLPCRFDVVAITAGQIEWIENAFTLNE.

The protein belongs to the UPF0102 family.

This chain is UPF0102 protein Sde_3146, found in Saccharophagus degradans (strain 2-40 / ATCC 43961 / DSM 17024).